The following is a 470-amino-acid chain: Aldehyde dehydrogenase family 3 comG (470 aa).

NAD(+) is bound at residue 196-201 (GSVKVG). Residues Glu218 and Cys252 contribute to the active site.

This sequence belongs to the aldehyde dehydrogenase family.

The protein localises to the cytoplasm. The catalysed reaction is an aldehyde + NADP(+) + H2O = a carboxylate + NADPH + 2 H(+). It catalyses the reaction an aldehyde + NAD(+) + H2O = a carboxylate + NADH + 2 H(+). The polypeptide is Aldehyde dehydrogenase family 3 comG (comG) (Dictyostelium discoideum (Social amoeba)).